Here is a 155-residue protein sequence, read N- to C-terminus: NADPH-dependent 7-cyano-7-deazaguanine reductase (155 aa).

Cys53 acts as the Thioimide intermediate in catalysis. Asp60 serves as the catalytic Proton donor. Substrate contacts are provided by residues 75-77 (VES) and 94-95 (HE).

Belongs to the GTP cyclohydrolase I family. QueF type 1 subfamily.

Its subcellular location is the cytoplasm. It catalyses the reaction 7-aminomethyl-7-carbaguanine + 2 NADP(+) = 7-cyano-7-deazaguanine + 2 NADPH + 3 H(+). The protein operates within tRNA modification; tRNA-queuosine biosynthesis. In terms of biological role, catalyzes the NADPH-dependent reduction of 7-cyano-7-deazaguanine (preQ0) to 7-aminomethyl-7-deazaguanine (preQ1). This is NADPH-dependent 7-cyano-7-deazaguanine reductase from Ruegeria pomeroyi (strain ATCC 700808 / DSM 15171 / DSS-3) (Silicibacter pomeroyi).